The following is a 347-amino-acid chain: Anthranilate phosphoribosyltransferase (347 aa).

5-phospho-alpha-D-ribose 1-diphosphate contacts are provided by residues G88, 91-92 (GD), T96, 98-101 (NIST), 116-124 (KHGNRSVSS), and S128. G88 contributes to the anthranilate binding site. S100 contacts Mg(2+). N119 contacts anthranilate. An anthranilate-binding site is contributed by R174. Mg(2+)-binding residues include D232 and E233.

The protein belongs to the anthranilate phosphoribosyltransferase family. Homodimer. Mg(2+) is required as a cofactor.

It carries out the reaction N-(5-phospho-beta-D-ribosyl)anthranilate + diphosphate = 5-phospho-alpha-D-ribose 1-diphosphate + anthranilate. It participates in amino-acid biosynthesis; L-tryptophan biosynthesis; L-tryptophan from chorismate: step 2/5. In terms of biological role, catalyzes the transfer of the phosphoribosyl group of 5-phosphorylribose-1-pyrophosphate (PRPP) to anthranilate to yield N-(5'-phosphoribosyl)-anthranilate (PRA). The sequence is that of Anthranilate phosphoribosyltransferase from Shewanella sp. (strain MR-7).